Reading from the N-terminus, the 70-residue chain is Protein FlmC homolog (70 aa).

The interval 1-21 (MSSPHQDSLLPRFAQGEEGHE) is disordered.

The polypeptide is Protein FlmC homolog (Escherichia coli).